The chain runs to 72 residues: MATRDSGGGQQRADRRAEEIDDVATEDTSASDLKERHEKLSEDVDSLLDEIDDVLEENAEEFVKGYVQKGGQ.

Over residues 1-10 (MATRDSGGGQ) the composition is skewed to gly residues. The segment at 1 to 41 (MATRDSGGGQQRADRRAEEIDDVATEDTSASDLKERHEKLS) is disordered. Positions 27–61 (DTSASDLKERHEKLSEDVDSLLDEIDDVLEENAEE) form a coiled coil. An ARC ATPase binding region spans residues 28–66 (TSASDLKERHEKLSEDVDSLLDEIDDVLEENAEEFVKGY). Over residues 32–41 (DLKERHEKLS) the composition is skewed to basic and acidic residues. Gln72 carries the deamidated glutamine modification. Gln72 is covalently cross-linked (Isoglutamyl lysine isopeptide (Gln-Lys) (interchain with K-? in acceptor proteins)).

This sequence belongs to the prokaryotic ubiquitin-like protein family. Strongly interacts with the proteasome-associated ATPase ARC through a hydrophobic interface; the interacting region of Pup lies in its C-terminal half. There is one Pup binding site per ARC hexamer ring. Is modified by deamidation of its C-terminal glutamine to glutamate by the deamidase Dop, a prerequisite to the subsequent pupylation process.

The protein operates within protein degradation; proteasomal Pup-dependent pathway. Protein modifier that is covalently attached to lysine residues of substrate proteins, thereby targeting them for proteasomal degradation. The tagging system is termed pupylation. This chain is Prokaryotic ubiquitin-like protein Pup, found in Frankia casuarinae (strain DSM 45818 / CECT 9043 / HFP020203 / CcI3).